Here is a 550-residue protein sequence, read N- to C-terminus: Undecaprenyl phosphate-alpha-4-amino-4-deoxy-L-arabinose arabinosyl transferase 2 (550 aa).

The next 11 membrane-spanning stretches (helical) occupy residues 4 to 24, 81 to 101, 110 to 132, 176 to 196, 204 to 224, 255 to 275, 288 to 308, 313 to 333, 348 to 368, 381 to 401, and 409 to 429; these read LKPGIGLMCIIALYYLLPLSF, FAVHFGSAFSIALTALMVYWL, WLGLTAAAIYSSCLLVYSIGTYA, FMTKGFLALAVPVLSVLPWVI, VFIYGPLALLGAVATSLPWVI, APFWYYLPVLLAGTLPWLGLL, TQSGAFYLLGWVVMPLLFFSL, LPTYILPSFAPLALLMARYAA, LLFGLLCVITVASVLAPWGLA, VLLGVLGFLVWAAVGGLTLRA, and AALCPLGIALLVGQAIPQQVI.

This sequence belongs to the glycosyltransferase 83 family.

The protein localises to the cell inner membrane. It catalyses the reaction 4-amino-4-deoxy-alpha-L-arabinopyranosyl di-trans,octa-cis-undecaprenyl phosphate + lipid IVA = lipid IIA + di-trans,octa-cis-undecaprenyl phosphate.. It participates in lipopolysaccharide metabolism; 4-amino-4-deoxy-beta-L-arabinose-lipid A biosynthesis. Its function is as follows. Catalyzes the transfer of the L-Ara4N moiety of the glycolipid undecaprenyl phosphate-alpha-L-Ara4N to lipid A. The modified arabinose is attached to lipid A and is required for resistance to polymyxin and cationic antimicrobial peptides. The sequence is that of Undecaprenyl phosphate-alpha-4-amino-4-deoxy-L-arabinose arabinosyl transferase 2 from Sodalis glossinidius (strain morsitans).